The sequence spans 109 residues: Large ribosomal subunit protein P2 (109 aa).

A disordered region spans residues 63–109 (ASVPSGGAGGASGGAAAAGGAAEEAKEEEKEEEKEESDEDMGFGLFD). Positions 68-79 (GGAGGASGGAAA) are enriched in gly residues. The segment covering 91–103 (EKEEEKEESDEDM) has biased composition (acidic residues). At serine 99 the chain carries Phosphoserine.

The protein belongs to the eukaryotic ribosomal protein P1/P2 family. As to quaternary structure, P1 and P2 exist as dimers at the large ribosomal subunit.

In terms of biological role, plays an important role in the elongation step of protein synthesis. This chain is Large ribosomal subunit protein P2, found in Fusarium culmorum.